A 536-amino-acid polypeptide reads, in one-letter code: uncharacterized protein (536 aa).

Disordered stretches follow at residues 1-76 (MSFT…SPAS) and 204-237 (NWNS…SNKS). 2 stretches are compositionally biased toward low complexity: residues 7 to 76 (TSSV…SPAS) and 204 to 234 (NWNS…PSKS). The chain crosses the membrane as a helical span at residues 247-267 (CSVAIPVGVVLILIGLGIFLW). 2 disordered regions span residues 287–354 (YGFN…LLGG) and 373–536 (DASD…LNLF). The segment covering 290-326 (NPNQPSNFRSPNRAPSTNNRYRGWNGSPTPAAGNNTN) has biased composition (polar residues). Residues 327 to 350 (GRPVAPRPSAGAGGANPPAASQPG) show a composition bias toward low complexity. The helical transmembrane segment at 351 to 371 (LLGGSSNSAGPIAAATAAGVG) threads the bilayer. Residues 403–424 (SASNEAEATMPPSNGSNFSEGL) are compositionally biased toward polar residues. The segment covering 430–454 (ESGPAVGAAGAAAEAAEHSGSGSDS) has biased composition (low complexity). The segment covering 480-509 (SYGSRAALSSRSQSNLLSPTSTGASNQPNY) has biased composition (polar residues). Residues 517-527 (SSSNVSIPRSS) show a composition bias toward low complexity.

It localises to the membrane. This is an uncharacterized protein from Schizosaccharomyces pombe (strain 972 / ATCC 24843) (Fission yeast).